Consider the following 576-residue polypeptide: MNIFNQLKQDIIAASQQLYNNQEIANTATIETPKDSFNGDLSSNIAMIIASKESIAPREVALKFKEVLVTLPYIASIEIAGPGFINFTIKAESWQAAIKDILQHEEKFFEIDIDKNSNINIEYVSANPTGPMHIGHARGAVYGDVLARILQKVGYSVTKEYYVNDAGSQINDLVSTVLLRYKEALGEQITIPIGLYPGEYLIPLGEILSKEYGNKLLTMNDVERFKIIKSLAVEKMLDLNRKDLADLGIKHDIFFSEQSLYDKGEIEKTVKLLESMGLIYEGTLPAPKGKVHEDWKHKVQKLFKSTNYGDSQDRPIEKADGSWSYFASDLAYAKDKIDRGANHLIYVLGADHSGYVKRIEAIVKALGQEKVKVDVKICQLVNFVENGVPVKMSKRLGSFASVQDVNKKVGKDIIRFMMLTRQNDKPLDFDLVKVKEQSRENPIFYVQYAHVRTKSILSKARELMPEAYNSFKEGKYNLSLLSTEEEIEIIKLLAAWTKTLEASVKYFEPHRIAFYLINLASKFHSMWNFGKENSDYRFIIENNQELTLARLALASVIQKVIASGLEVIGVEPMVTM.

Residues 126–136 (ANPTGPMHIGH) carry the 'HIGH' region motif.

Belongs to the class-I aminoacyl-tRNA synthetase family. Monomer.

It localises to the cytoplasm. The catalysed reaction is tRNA(Arg) + L-arginine + ATP = L-arginyl-tRNA(Arg) + AMP + diphosphate. The sequence is that of Arginine--tRNA ligase from Rickettsia typhi (strain ATCC VR-144 / Wilmington).